Here is a 2594-residue protein sequence, read N- to C-terminus: Immunoglobulin superfamily member 10 (2594 aa).

The N-terminal stretch at 1–25 (MQKRGREVSCLLISLTAICLVVTPG) is a signal peptide. Residues 29–56 (CPRRCACYVPTEVHCTFRYLTSIPDGIP) enclose the LRRNT domain. LRR repeat units follow at residues 58–79 (NVER…DFSG), 82–103 (RLEL…TFSG), 106–127 (SLQV…TLYG), 130–151 (SLTR…AFYG), 154–175 (LLRL…TFVS), and 186–207 (FIKY…MVSS). An LRRCT domain is found at 219-281 (NPWTCDCHLK…VPSGSFLCTK (63 aa)). N-linked (GlcNAc...) asparagine glycosylation occurs at asparagine 439. 2 Ig-like C2-type domains span residues 461–567 (PKAE…YRIT) and 571–661 (PYVE…FQVS). 2 disulfide bridges follow: cysteine 497/cysteine 551 and cysteine 595/cysteine 645. A glycan (N-linked (GlcNAc...) asparagine) is linked at asparagine 627. The segment covering 670 to 685 (IEHDRDIDGSGLEEPK) has biased composition (basic and acidic residues). Disordered regions lie at residues 670–725 (IEHD…RDLT) and 963–1008 (VSSN…GRER). Over residues 715-725 (IHKKNKHRDLT) the composition is skewed to basic residues. The segment covering 972-984 (TTKDPGFSKRPSD) has biased composition (basic and acidic residues). Polar residues predominate over residues 985–1003 (SHTTAPSLFQTPRNNSTGN). N-linked (GlcNAc...) asparagine glycosylation is present at asparagine 1044. 3 disordered regions span residues 1228 to 1251 (TATK…PSTT), 1333 to 1364 (VRSK…GYST), and 1428 to 1457 (SQES…PSPP). Over residues 1333-1342 (VRSKKAKDQT) the composition is skewed to basic and acidic residues. The segment covering 1355–1364 (TPRQISGYST) has biased composition (polar residues). 10 consecutive Ig-like C2-type domains span residues 1619–1710 (PRII…VTLS), 1715–1807 (PARI…VKIQ), 1812–1901 (PPVI…RRVV), 1912–2005 (PRIE…VRLR), 2008–2106 (PAKI…VHLT), 2112–2200 (PRIR…YKLD), 2205–2302 (PPLI…LKVL), 2308–2398 (PTFR…ILLE), 2403–2493 (PVIL…VPVT), and 2499–2592 (PRII…TYIQ). 3 disulfide bridges follow: cysteine 1641–cysteine 1694, cysteine 1738–cysteine 1791, and cysteine 1835–cysteine 1888. An LRR 11 repeat occupies 1658–1681 (SGREISRGIQKTRFHVLPNGTLSI). N-linked (GlcNAc...) asparagine glycans are attached at residues asparagine 1676, asparagine 1780, asparagine 1870, and asparagine 1933. 7 disulfide bridges follow: cysteine 1934–cysteine 1987, cysteine 2031–cysteine 2090, cysteine 2134–cysteine 2184, cysteine 2232–cysteine 2284, cysteine 2330–cysteine 2382, cysteine 2425–cysteine 2477, and cysteine 2521–cysteine 2576. Asparagine 2072 carries an N-linked (GlcNAc...) asparagine glycan. N-linked (GlcNAc...) asparagine glycosylation is present at asparagine 2364. A Phosphotyrosine modification is found at tyrosine 2574.

As to expression, in the embryo, expressed in the nasal mesenchyme.

The protein resides in the secreted. In terms of biological role, involved in the control of early migration of neurons expressing gonadotropin-releasing hormone (GNRH neurons). May be involved in the maintenance of osteochondroprogenitor cells pool. This is Immunoglobulin superfamily member 10 (Igsf10) from Mus musculus (Mouse).